A 145-amino-acid polypeptide reads, in one-letter code: Peptide methionine sulfoxide reductase MsrB (145 aa).

The MsrB domain occupies 6-129 (KNERLQQLTD…NSAALRFIPV (124 aa)). Cys118 serves as the catalytic Nucleophile.

This sequence belongs to the MsrB Met sulfoxide reductase family.

The catalysed reaction is L-methionyl-[protein] + [thioredoxin]-disulfide + H2O = L-methionyl-(R)-S-oxide-[protein] + [thioredoxin]-dithiol. This chain is Peptide methionine sulfoxide reductase MsrB, found in Listeria monocytogenes serovar 1/2a (strain ATCC BAA-679 / EGD-e).